Reading from the N-terminus, the 51-residue chain is Large ribosomal subunit protein eL39 (51 aa).

The interval 32–51 (KGSVKQHPKMRHWRRNTLKK) is disordered. Positions 33–51 (GSVKQHPKMRHWRRNTLKK) are enriched in basic residues.

Belongs to the eukaryotic ribosomal protein eL39 family.

This chain is Large ribosomal subunit protein eL39, found in Methanococcus vannielii (strain ATCC 35089 / DSM 1224 / JCM 13029 / OCM 148 / SB).